We begin with the raw amino-acid sequence, 201 residues long: Imidazoleglycerol-phosphate dehydratase (201 aa).

The protein belongs to the imidazoleglycerol-phosphate dehydratase family.

Its subcellular location is the cytoplasm. The catalysed reaction is D-erythro-1-(imidazol-4-yl)glycerol 3-phosphate = 3-(imidazol-4-yl)-2-oxopropyl phosphate + H2O. It participates in amino-acid biosynthesis; L-histidine biosynthesis; L-histidine from 5-phospho-alpha-D-ribose 1-diphosphate: step 6/9. In Prochlorococcus marinus subsp. pastoris (strain CCMP1986 / NIES-2087 / MED4), this protein is Imidazoleglycerol-phosphate dehydratase.